The primary structure comprises 132 residues: SH2 domain-containing protein 1B2 (132 aa).

An SH2 domain is found at Y5–I101.

As to quaternary structure, interacts with SLAMF1 (phosphorylated). Interacts with CD244. Interacts with Src kinases HCK, LYN, FYN, FGR and LCK (via kinase domains). In terms of tissue distribution, expressed in spleen. Expressed in macrophages, CD8(+) T-Cells and NK cells. Conflictingly found only in NK cells.

It is found in the cytoplasm. In terms of biological role, cytoplasmic adapter regulating receptors of the signaling lymphocytic activation molecule (SLAM) family. In SLAM signaling may cooperate with Sh2d1a/SAP. Plays a role in regulation of effector functions of natural killer (NK) cells by controlling signal transduction through Cd244/2b4. However, conflicting results are reported which may reflect the use of different strain backgrounds. Proposed to act as an inhibitor of Cd244-mediated NK cell function including cytotoxicity and IFN-gamma production, the latter found also by triggering Klra4 and Klrk1 next to Cd244. Seems to positively regulate Cd244- and Cd84-dependent NK cell functions implicating Cd244-mediated phosphorylation of Vav1. The protein is SH2 domain-containing protein 1B2 (Sh2d1b2) of Mus musculus (Mouse).